Consider the following 510-residue polypeptide: ATP synthase subunit alpha (510 aa).

169 to 176 (GDRQTGKT) provides a ligand contact to ATP.

Belongs to the ATPase alpha/beta chains family. As to quaternary structure, F-type ATPases have 2 components, CF(1) - the catalytic core - and CF(0) - the membrane proton channel. CF(1) has five subunits: alpha(3), beta(3), gamma(1), delta(1), epsilon(1). CF(0) has four main subunits: a(1), b(1), b'(1) and c(9-12).

Its subcellular location is the cell inner membrane. The catalysed reaction is ATP + H2O + 4 H(+)(in) = ADP + phosphate + 5 H(+)(out). Its function is as follows. Produces ATP from ADP in the presence of a proton gradient across the membrane. The alpha chain is a regulatory subunit. The protein is ATP synthase subunit alpha of Rhodopseudomonas palustris (strain HaA2).